A 214-amino-acid chain; its full sequence is Protein-L-isoaspartate O-methyltransferase (214 aa).

Ser63 is a catalytic residue.

This sequence belongs to the methyltransferase superfamily. L-isoaspartyl/D-aspartyl protein methyltransferase family.

It localises to the cytoplasm. The catalysed reaction is [protein]-L-isoaspartate + S-adenosyl-L-methionine = [protein]-L-isoaspartate alpha-methyl ester + S-adenosyl-L-homocysteine. Functionally, catalyzes the methyl esterification of L-isoaspartyl residues in peptides and proteins that result from spontaneous decomposition of normal L-aspartyl and L-asparaginyl residues. It plays a role in the repair and/or degradation of damaged proteins. The sequence is that of Protein-L-isoaspartate O-methyltransferase from Maridesulfovibrio salexigens (strain ATCC 14822 / DSM 2638 / NCIMB 8403 / VKM B-1763) (Desulfovibrio salexigens).